Consider the following 1116-residue polypeptide: MAP kinase kinase kinase mkh1 (1116 aa).

2 disordered regions span residues Leu510–Leu601 and Ala618–His647. Positions Asn515–Ser531 are enriched in low complexity. The span at Leu553–Arg569 shows a compositional bias: basic residues. The segment covering Ser588 to Leu601 has biased composition (low complexity). Residues Pro634–His647 are compositionally biased toward polar residues. The Protein kinase domain maps to Trp825 to Met1094. Residues Ile831 to Val839 and Lys854 each bind ATP. Asp955 acts as the Proton acceptor in catalysis.

The protein belongs to the protein kinase superfamily. STE Ser/Thr protein kinase family. MAP kinase kinase kinase subfamily.

The catalysed reaction is L-seryl-[protein] + ATP = O-phospho-L-seryl-[protein] + ADP + H(+). It carries out the reaction L-threonyl-[protein] + ATP = O-phospho-L-threonyl-[protein] + ADP + H(+). In terms of biological role, may regulate cell morphology, cell wall integrity, salt resistance, cell cycle reentry from stationary-phase arrest, and filamentous growth in response to stress. Activates the MAP kinase kinase skh1/pek1 by phosphorylation. The chain is MAP kinase kinase kinase mkh1 (mkh1) from Schizosaccharomyces pombe (strain 972 / ATCC 24843) (Fission yeast).